Here is a 235-residue protein sequence, read N- to C-terminus: Alpha-S2-casein (235 aa).

A signal peptide spans 1 to 15 (MKFFIFTCLLAVAFA). A phosphoserine mark is found at S23, S24, S25, S28, S47, S72, S73, S74, S77, S147, S149, and S168. Residues 144–158 (EELSTSEEPVSSSQE) show a composition bias toward polar residues. Positions 144 to 163 (EELSTSEEPVSSSQEENTKT) are disordered.

Belongs to the alpha-casein family. Mammary gland specific. Secreted in milk.

The protein localises to the secreted. Functionally, important role in the capacity of milk to transport calcium phosphate. This Sus scrofa (Pig) protein is Alpha-S2-casein (CSN1S2).